The sequence spans 233 residues: 5'-methylthioadenosine/S-adenosylhomocysteine nucleosidase (233 aa).

Glutamate 12 acts as the Proton acceptor in catalysis. Residues glycine 78, isoleucine 152, and 173 to 174 contribute to the substrate site; that span reads ME. Aspartate 197 serves as the catalytic Proton donor.

This sequence belongs to the PNP/UDP phosphorylase family. MtnN subfamily. As to quaternary structure, homodimer.

The catalysed reaction is S-adenosyl-L-homocysteine + H2O = S-(5-deoxy-D-ribos-5-yl)-L-homocysteine + adenine. It carries out the reaction S-methyl-5'-thioadenosine + H2O = 5-(methylsulfanyl)-D-ribose + adenine. The enzyme catalyses 5'-deoxyadenosine + H2O = 5-deoxy-D-ribose + adenine. It functions in the pathway amino-acid biosynthesis; L-methionine biosynthesis via salvage pathway; S-methyl-5-thio-alpha-D-ribose 1-phosphate from S-methyl-5'-thioadenosine (hydrolase route): step 1/2. Its function is as follows. Catalyzes the irreversible cleavage of the glycosidic bond in both 5'-methylthioadenosine (MTA) and S-adenosylhomocysteine (SAH/AdoHcy) to adenine and the corresponding thioribose, 5'-methylthioribose and S-ribosylhomocysteine, respectively. Also cleaves 5'-deoxyadenosine, a toxic by-product of radical S-adenosylmethionine (SAM) enzymes, into 5-deoxyribose and adenine. Thus, is required for in vivo function of the radical SAM enzymes biotin synthase and lipoic acid synthase, that are inhibited by 5'-deoxyadenosine accumulation. This chain is 5'-methylthioadenosine/S-adenosylhomocysteine nucleosidase, found in Yersinia enterocolitica serotype O:8 / biotype 1B (strain NCTC 13174 / 8081).